Consider the following 606-residue polypeptide: Elongation factor 4 (606 aa).

A tr-type G domain is found at 7–189 (SRIRNFCIIA…AVVDRVPPPK (183 aa)). GTP is bound by residues 19–24 (DHGKST) and 136–139 (NKID).

This sequence belongs to the TRAFAC class translation factor GTPase superfamily. Classic translation factor GTPase family. LepA subfamily.

The protein resides in the cell inner membrane. It carries out the reaction GTP + H2O = GDP + phosphate + H(+). Its function is as follows. Required for accurate and efficient protein synthesis under certain stress conditions. May act as a fidelity factor of the translation reaction, by catalyzing a one-codon backward translocation of tRNAs on improperly translocated ribosomes. Back-translocation proceeds from a post-translocation (POST) complex to a pre-translocation (PRE) complex, thus giving elongation factor G a second chance to translocate the tRNAs correctly. Binds to ribosomes in a GTP-dependent manner. The chain is Elongation factor 4 from Parasynechococcus marenigrum (strain WH8102).